A 224-amino-acid chain; its full sequence is Cytidylate kinase (224 aa).

Gly11–Thr19 contributes to the ATP binding site.

This sequence belongs to the cytidylate kinase family. Type 1 subfamily.

The protein resides in the cytoplasm. The enzyme catalyses CMP + ATP = CDP + ADP. It catalyses the reaction dCMP + ATP = dCDP + ADP. In Listeria monocytogenes serotype 4b (strain CLIP80459), this protein is Cytidylate kinase.